The primary structure comprises 448 residues: Glucose-6-phosphate isomerase (448 aa).

E290 serves as the catalytic Proton donor. Catalysis depends on residues H311 and K425.

This sequence belongs to the GPI family.

It localises to the cytoplasm. It catalyses the reaction alpha-D-glucose 6-phosphate = beta-D-fructose 6-phosphate. Its pathway is carbohydrate biosynthesis; gluconeogenesis. It participates in carbohydrate degradation; glycolysis; D-glyceraldehyde 3-phosphate and glycerone phosphate from D-glucose: step 2/4. Functionally, catalyzes the reversible isomerization of glucose-6-phosphate to fructose-6-phosphate. This is Glucose-6-phosphate isomerase from Levilactobacillus brevis (strain ATCC 367 / BCRC 12310 / CIP 105137 / JCM 1170 / LMG 11437 / NCIMB 947 / NCTC 947) (Lactobacillus brevis).